The sequence spans 323 residues: MSSLPPAIFLMGPTAAGKTDLAMALADALPCELISVDSALIYRGMDIGTAKPSRELLARYPHRLIDIRDPAESYSAAEFRADALAAMAKATARGRIPLLVGGTMLYYKALLEGLADMPGADPEVRAAIEAEAQAEGWEALHRQLAEVDPESAARIHPNDPQRLMRALEVYRLGGVSMSDLRRRQSAEKADFDASGRNQLPYTVAQLAIAPEQRQVLHARIAQRFRQMLEQGFIAEVEALHARSDLHAGLPSIRAVGYRQVWDYLDGKLSYAEMTERGIIATRQLAKRQFTWLRSWSHLHWMDSLAGDNLPRALKYLKTVSILA.

Residue 12-19 (GPTAAGKT) participates in ATP binding. Residue 14–19 (TAAGKT) participates in substrate binding. Interaction with substrate tRNA regions lie at residues 37 to 40 (DSAL) and 161 to 165 (QRLMR).

This sequence belongs to the IPP transferase family. Monomer. The cofactor is Mg(2+).

The enzyme catalyses adenosine(37) in tRNA + dimethylallyl diphosphate = N(6)-dimethylallyladenosine(37) in tRNA + diphosphate. Catalyzes the transfer of a dimethylallyl group onto the adenine at position 37 in tRNAs that read codons beginning with uridine, leading to the formation of N6-(dimethylallyl)adenosine (i(6)A). In Pseudomonas aeruginosa (strain LESB58), this protein is tRNA dimethylallyltransferase.